The sequence spans 103 residues: Large ribosomal subunit protein bL21 (103 aa).

This sequence belongs to the bacterial ribosomal protein bL21 family. As to quaternary structure, part of the 50S ribosomal subunit. Contacts protein L20.

Its function is as follows. This protein binds to 23S rRNA in the presence of protein L20. This is Large ribosomal subunit protein bL21 from Ectopseudomonas mendocina (strain ymp) (Pseudomonas mendocina).